Consider the following 453-residue polypeptide: GTPase Der (453 aa).

EngA-type G domains lie at 4 to 169 (PIVA…PTQG) and 177 to 352 (TKIA…NEYQ). Residues 10–17 (GRPNVGKS), 57–61 (DTGGL), 120–123 (NKCE), 183–190 (GRPNVGKS), 230–234 (DTAGI), and 295–298 (NKWD) contribute to the GTP site. The KH-like domain maps to 353 to 438 (RRVTTSVINE…PIRLLWRGKK (86 aa)).

It belongs to the TRAFAC class TrmE-Era-EngA-EngB-Septin-like GTPase superfamily. EngA (Der) GTPase family. As to quaternary structure, associates with the 50S ribosomal subunit.

Functionally, GTPase that plays an essential role in the late steps of ribosome biogenesis. This is GTPase Der from Trichodesmium erythraeum (strain IMS101).